The following is a 354-amino-acid chain: N-acetyl-gamma-glutamyl-phosphate reductase (354 aa).

Cys-156 is a catalytic residue.

This sequence belongs to the NAGSA dehydrogenase family. Type 1 subfamily.

The protein localises to the cytoplasm. The enzyme catalyses N-acetyl-L-glutamate 5-semialdehyde + phosphate + NADP(+) = N-acetyl-L-glutamyl 5-phosphate + NADPH + H(+). The protein operates within amino-acid biosynthesis; L-arginine biosynthesis; N(2)-acetyl-L-ornithine from L-glutamate: step 3/4. Catalyzes the NADPH-dependent reduction of N-acetyl-5-glutamyl phosphate to yield N-acetyl-L-glutamate 5-semialdehyde. The sequence is that of N-acetyl-gamma-glutamyl-phosphate reductase from Bordetella bronchiseptica (strain ATCC BAA-588 / NCTC 13252 / RB50) (Alcaligenes bronchisepticus).